A 370-amino-acid polypeptide reads, in one-letter code: 3-hydroxy-3-methylglutaryl-CoA lyase, cytoplasmic (370 aa).

A lipid anchor (N-myristoyl glycine) is attached at Gly-2. In terms of domain architecture, Pyruvate carboxyltransferase spans 78–345; sequence VKIVEVGPRD…NTGVNLYKVM (268 aa). Arg-86 lines the substrate pocket. Positions 87, 278, and 280 each coordinate a divalent metal cation. Residue Cys-311 is part of the active site. Asn-320 is a binding site for a divalent metal cation.

It belongs to the HMG-CoA lyase family. A divalent metal cation is required as a cofactor.

It is found in the cytoplasm. The protein localises to the cytosol. It localises to the endoplasmic reticulum membrane. The enzyme catalyses (3S)-3-hydroxy-3-methylglutaryl-CoA = acetoacetate + acetyl-CoA. It participates in metabolic intermediate metabolism; (S)-3-hydroxy-3-methylglutaryl-CoA degradation; acetoacetate from (S)-3-hydroxy-3-methylglutaryl-CoA: step 1/1. Functionally, non-mitochondrial 3-hydroxy-3-methylglutaryl-CoA lyase that catalyzes a cation-dependent cleavage of (S)-3-hydroxy-3-methylglutaryl-CoA into acetyl-CoA and acetoacetate, a key step in ketogenesis, the products of which support energy production in nonhepatic animal tissues. The chain is 3-hydroxy-3-methylglutaryl-CoA lyase, cytoplasmic (HMGCLL1) from Homo sapiens (Human).